A 335-amino-acid polypeptide reads, in one-letter code: Methionine import ATP-binding protein MetN 1 (335 aa).

The 241-residue stretch at 2–242 (IEFQNVHKTY…PKHPTTRRFV (241 aa)) folds into the ABC transporter domain. 38–45 (GHSGAGKS) serves as a coordination point for ATP.

It belongs to the ABC transporter superfamily. Methionine importer (TC 3.A.1.24) family. The complex is composed of two ATP-binding proteins (MetN), two transmembrane proteins (MetI) and a solute-binding protein (MetQ).

The protein localises to the cell inner membrane. It carries out the reaction L-methionine(out) + ATP + H2O = L-methionine(in) + ADP + phosphate + H(+). The catalysed reaction is D-methionine(out) + ATP + H2O = D-methionine(in) + ADP + phosphate + H(+). Functionally, part of the ABC transporter complex MetNIQ involved in methionine import. Responsible for energy coupling to the transport system. This Pseudomonas fluorescens (strain ATCC BAA-477 / NRRL B-23932 / Pf-5) protein is Methionine import ATP-binding protein MetN 1.